A 592-amino-acid polypeptide reads, in one-letter code: Arginine--tRNA ligase (592 aa).

The short motif at 131–141 (ANPTGPMHVGH) is the 'HIGH' region element.

It belongs to the class-I aminoacyl-tRNA synthetase family. Monomer.

It localises to the cytoplasm. It carries out the reaction tRNA(Arg) + L-arginine + ATP = L-arginyl-tRNA(Arg) + AMP + diphosphate. The chain is Arginine--tRNA ligase from Rhodospirillum rubrum (strain ATCC 11170 / ATH 1.1.1 / DSM 467 / LMG 4362 / NCIMB 8255 / S1).